The following is a 168-amino-acid chain: 2-oxo-4-hydroxy-4-carboxy-5-ureidoimidazoline decarboxylase (168 aa).

Residue His70 is the Proton donor; for OHCU decarboxylase activity of the active site. The span at 70 to 79 (HPDLGERTEM) shows a compositional bias: basic and acidic residues. The tract at residues 70-93 (HPDLGERTEMTDASEAEQASAELD) is disordered. Substrate is bound by residues Pro71, 83 to 87 (SEAEQ), and 118 to 122 (FVMAV).

It belongs to the OHCU decarboxylase family.

The catalysed reaction is 5-hydroxy-2-oxo-4-ureido-2,5-dihydro-1H-imidazole-5-carboxylate + H(+) = (S)-allantoin + CO2. It functions in the pathway purine metabolism; urate degradation; (S)-allantoin from urate: step 3/3. Catalyzes the stereoselective decarboxylation of 2-oxo-4-hydroxy-4-carboxy-5-ureidoimidazoline (OHCU) to (S)-allantoin. The chain is 2-oxo-4-hydroxy-4-carboxy-5-ureidoimidazoline decarboxylase from Haloferax volcanii (strain ATCC 29605 / DSM 3757 / JCM 8879 / NBRC 14742 / NCIMB 2012 / VKM B-1768 / DS2) (Halobacterium volcanii).